The chain runs to 217 residues: 3,4-dihydroxy-2-butanone 4-phosphate synthase (217 aa).

D-ribulose 5-phosphate-binding positions include 37–38 (RE), Asp42, 150–154 (RGGHT), and Glu174. Glu38 is a binding site for Mg(2+). Mg(2+) is bound at residue His153.

Belongs to the DHBP synthase family. In terms of assembly, homodimer. It depends on Mg(2+) as a cofactor. The cofactor is Mn(2+).

The catalysed reaction is D-ribulose 5-phosphate = (2S)-2-hydroxy-3-oxobutyl phosphate + formate + H(+). It participates in cofactor biosynthesis; riboflavin biosynthesis; 2-hydroxy-3-oxobutyl phosphate from D-ribulose 5-phosphate: step 1/1. Catalyzes the conversion of D-ribulose 5-phosphate to formate and 3,4-dihydroxy-2-butanone 4-phosphate. This is 3,4-dihydroxy-2-butanone 4-phosphate synthase from Escherichia fergusonii (strain ATCC 35469 / DSM 13698 / CCUG 18766 / IAM 14443 / JCM 21226 / LMG 7866 / NBRC 102419 / NCTC 12128 / CDC 0568-73).